The following is a 308-amino-acid chain: ADP-L-glycero-D-manno-heptose-6-epimerase (308 aa).

NADP(+) is bound by residues 10–11, 31–32, Lys-38, Lys-53, 75–79, and Asn-92; these read FI, DN, and EGACS. The active-site Proton acceptor is Tyr-139. Residue Lys-143 coordinates NADP(+). A substrate-binding site is contributed by Asn-168. NADP(+) is bound by residues Val-169 and Lys-177. Lys-177 functions as the Proton acceptor in the catalytic mechanism. Residues Ser-179, His-186, 200 to 203, Arg-208, and Tyr-271 each bind substrate; that span reads FAGS.

The protein belongs to the NAD(P)-dependent epimerase/dehydratase family. HldD subfamily. As to quaternary structure, homopentamer. The cofactor is NADP(+).

It catalyses the reaction ADP-D-glycero-beta-D-manno-heptose = ADP-L-glycero-beta-D-manno-heptose. It participates in nucleotide-sugar biosynthesis; ADP-L-glycero-beta-D-manno-heptose biosynthesis; ADP-L-glycero-beta-D-manno-heptose from D-glycero-beta-D-manno-heptose 7-phosphate: step 4/4. Its pathway is bacterial outer membrane biogenesis; LOS core biosynthesis. Catalyzes the interconversion between ADP-D-glycero-beta-D-manno-heptose and ADP-L-glycero-beta-D-manno-heptose via an epimerization at carbon 6 of the heptose. In Haemophilus influenzae (strain ATCC 51907 / DSM 11121 / KW20 / Rd), this protein is ADP-L-glycero-D-manno-heptose-6-epimerase.